We begin with the raw amino-acid sequence, 1026 residues long: Multidrug resistance protein MdtC (1026 aa).

The next 12 helical transmembrane spans lie at 12–32, 333–353, 360–380, 387–407, 431–451, 463–483, 528–548, 853–873, 875–895, 897–917, 953–973, and 984–1004; these read VATL…FRLL, EVEQ…FLFL, AIPA…MYLC, LSLM…IVVL, VGFT…PLLL, FAVT…TLTP, WVLL…ISIP, LLLI…LYES, VHPL…LLAL, WFGA…IGIV, PIMM…LTSG, and ITIV…TPVV.

It belongs to the resistance-nodulation-cell division (RND) (TC 2.A.6) family. MdtC subfamily. In terms of assembly, part of a tripartite efflux system composed of MdtA, MdtB and MdtC. MdtC forms a heteromultimer with MdtB.

The protein resides in the cell inner membrane. The polypeptide is Multidrug resistance protein MdtC (Pectobacterium carotovorum subsp. carotovorum (strain PC1)).